An 887-amino-acid chain; its full sequence is Alanine--tRNA ligase (887 aa).

Residues H564, H568, C676, and H680 each coordinate Zn(2+).

This sequence belongs to the class-II aminoacyl-tRNA synthetase family. Requires Zn(2+) as cofactor.

It is found in the cytoplasm. It carries out the reaction tRNA(Ala) + L-alanine + ATP = L-alanyl-tRNA(Ala) + AMP + diphosphate. Functionally, catalyzes the attachment of alanine to tRNA(Ala) in a two-step reaction: alanine is first activated by ATP to form Ala-AMP and then transferred to the acceptor end of tRNA(Ala). Also edits incorrectly charged Ser-tRNA(Ala) and Gly-tRNA(Ala) via its editing domain. This chain is Alanine--tRNA ligase, found in Rhizobium meliloti (strain 1021) (Ensifer meliloti).